The chain runs to 329 residues: Probable carboxylesterase 8 (329 aa).

The Involved in the stabilization of the negatively charged intermediate by the formation of the oxyanion hole motif lies at 73 to 75; sequence HGG. Residues Ser-161, Asp-264, and His-294 contribute to the active site.

Belongs to the 'GDXG' lipolytic enzyme family. In terms of tissue distribution, expressed in leaves, stems, flowers and siliques.

It carries out the reaction a carboxylic ester + H2O = an alcohol + a carboxylate + H(+). Its function is as follows. Carboxylesterase acting on esters with varying acyl chain length. The sequence is that of Probable carboxylesterase 8 (CXE8) from Arabidopsis thaliana (Mouse-ear cress).